Consider the following 177-residue polypeptide: Protein C2-DOMAIN ABA-RELATED 4 (177 aa).

Residues 4–118 form the C2 domain; it reads ACPARTSSLM…LRMQLDGLPS (115 aa). The Ca(2+) site is built by R33, D34, D39, D85, H86, D87, and D93.

Belongs to the plant CAR protein family. Dimers and oligomers. Binds to PYR/PYL/RCAR abscisic acid intracellular receptors in an ABA-independent manner, both at the plasma membrane and in the nucleus. Interacts directly with PYR1, PYL1, PYL4, PYL6 and PYL8. Binds phospholipids in a Ca(2+)-dependent manner. Interacts with YchF1. Requires Ca(2+) as cofactor.

It is found in the cell membrane. Its subcellular location is the nucleus. The protein localises to the cytoplasm. It localises to the cytosol. Functionally, mediates the transient calcium-dependent interaction of PYR/PYL/RCAR abscisic acid (ABA) receptors with the plasma membrane and thus regulates ABA sensitivity. Stimulates the GTPase/ATPase activities of YchF1, and regulates its subcellular localization. Promotes tolerance towards salinity stress by limiting the accumulation of reactive oxygen species (ROS). Promotes resistance to bacterial pathogens (e.g. Xanthomonas oryzae pv. oryzae and P.syringae pv. tomato DC3000). Binds liposomes in the absence of exogenous Ca(2+), but this activity is enhanced in the presence of Ca(2+) and generates membrane curvature. The chain is Protein C2-DOMAIN ABA-RELATED 4 from Arabidopsis thaliana (Mouse-ear cress).